We begin with the raw amino-acid sequence, 357 residues long: tRNA/tmRNA (uracil-C(5))-methyltransferase (357 aa).

Positions 185, 212, 217, 233, and 291 each coordinate S-adenosyl-L-methionine. The active-site Nucleophile is C316. Catalysis depends on E350, which acts as the Proton acceptor.

The protein belongs to the class I-like SAM-binding methyltransferase superfamily. RNA M5U methyltransferase family. TrmA subfamily.

It catalyses the reaction uridine(54) in tRNA + S-adenosyl-L-methionine = 5-methyluridine(54) in tRNA + S-adenosyl-L-homocysteine + H(+). The enzyme catalyses uridine(341) in tmRNA + S-adenosyl-L-methionine = 5-methyluridine(341) in tmRNA + S-adenosyl-L-homocysteine + H(+). Dual-specificity methyltransferase that catalyzes the formation of 5-methyluridine at position 54 (m5U54) in all tRNAs, and that of position 341 (m5U341) in tmRNA (transfer-mRNA). The sequence is that of tRNA/tmRNA (uracil-C(5))-methyltransferase from Campylobacter hominis (strain ATCC BAA-381 / DSM 21671 / CCUG 45161 / LMG 19568 / NCTC 13146 / CH001A).